The sequence spans 231 residues: Cytidylate kinase (231 aa).

Residue 18–26 participates in ATP binding; that stretch reads GPSGTGKSS.

This sequence belongs to the cytidylate kinase family. Type 1 subfamily.

Its subcellular location is the cytoplasm. The catalysed reaction is CMP + ATP = CDP + ADP. The enzyme catalyses dCMP + ATP = dCDP + ADP. This is Cytidylate kinase from Streptomyces avermitilis (strain ATCC 31267 / DSM 46492 / JCM 5070 / NBRC 14893 / NCIMB 12804 / NRRL 8165 / MA-4680).